Here is a 364-residue protein sequence, read N- to C-terminus: Dual-specificity RNA methyltransferase RlmN (364 aa).

The active-site Proton acceptor is the Glu91. A Radical SAM core domain is found at Glu97–Asp333. Residues Cys104 and Cys338 are joined by a disulfide bond. [4Fe-4S] cluster is bound by residues Cys111, Cys115, and Cys118. Residues Gly164 to Glu165, Ser196, Ser218 to His220, and Asn295 each bind S-adenosyl-L-methionine. The active-site S-methylcysteine intermediate is the Cys338.

Belongs to the radical SAM superfamily. RlmN family. It depends on [4Fe-4S] cluster as a cofactor.

It is found in the cytoplasm. It catalyses the reaction adenosine(2503) in 23S rRNA + 2 reduced [2Fe-2S]-[ferredoxin] + 2 S-adenosyl-L-methionine = 2-methyladenosine(2503) in 23S rRNA + 5'-deoxyadenosine + L-methionine + 2 oxidized [2Fe-2S]-[ferredoxin] + S-adenosyl-L-homocysteine. The catalysed reaction is adenosine(37) in tRNA + 2 reduced [2Fe-2S]-[ferredoxin] + 2 S-adenosyl-L-methionine = 2-methyladenosine(37) in tRNA + 5'-deoxyadenosine + L-methionine + 2 oxidized [2Fe-2S]-[ferredoxin] + S-adenosyl-L-homocysteine. In terms of biological role, specifically methylates position 2 of adenine 2503 in 23S rRNA and position 2 of adenine 37 in tRNAs. m2A2503 modification seems to play a crucial role in the proofreading step occurring at the peptidyl transferase center and thus would serve to optimize ribosomal fidelity. In Neisseria meningitidis serogroup C (strain 053442), this protein is Dual-specificity RNA methyltransferase RlmN.